Consider the following 339-residue polypeptide: tRNA N6-adenosine threonylcarbamoyltransferase (339 aa).

Fe cation contacts are provided by H114 and H118. Substrate-binding positions include 137–141, D170, G183, D187, and N277; that span reads VVSGG. D305 provides a ligand contact to Fe cation.

This sequence belongs to the KAE1 / TsaD family. Fe(2+) serves as cofactor.

The protein resides in the cytoplasm. The catalysed reaction is L-threonylcarbamoyladenylate + adenosine(37) in tRNA = N(6)-L-threonylcarbamoyladenosine(37) in tRNA + AMP + H(+). Required for the formation of a threonylcarbamoyl group on adenosine at position 37 (t(6)A37) in tRNAs that read codons beginning with adenine. Is involved in the transfer of the threonylcarbamoyl moiety of threonylcarbamoyl-AMP (TC-AMP) to the N6 group of A37, together with TsaE and TsaB. TsaD likely plays a direct catalytic role in this reaction. In Clostridium perfringens (strain ATCC 13124 / DSM 756 / JCM 1290 / NCIMB 6125 / NCTC 8237 / Type A), this protein is tRNA N6-adenosine threonylcarbamoyltransferase.